The following is a 470-amino-acid chain: UDP-N-acetylmuramoylalanine--D-glutamate ligase (470 aa).

121–127 (GTNGKST) is an ATP binding site.

It belongs to the MurCDEF family.

It localises to the cytoplasm. It carries out the reaction UDP-N-acetyl-alpha-D-muramoyl-L-alanine + D-glutamate + ATP = UDP-N-acetyl-alpha-D-muramoyl-L-alanyl-D-glutamate + ADP + phosphate + H(+). The protein operates within cell wall biogenesis; peptidoglycan biosynthesis. Functionally, cell wall formation. Catalyzes the addition of glutamate to the nucleotide precursor UDP-N-acetylmuramoyl-L-alanine (UMA). This Rhizobium etli (strain ATCC 51251 / DSM 11541 / JCM 21823 / NBRC 15573 / CFN 42) protein is UDP-N-acetylmuramoylalanine--D-glutamate ligase.